The chain runs to 660 residues: Class E vacuolar protein-sorting machinery protein HSE1 (660 aa).

One can recognise a VHS domain in the interval 16 to 148; it reads ATDENLASED…QLRAKNHVFD (133 aa). The segment at 146-254 is disordered; sequence VFDEPEPTPE…QPLEPEPPRV (109 aa). Positions 158–182 are enriched in basic and acidic residues; that stretch reads EEVRRRQEEEELQRVLELSKQDKGG. The 20-residue stretch at 164 to 183 folds into the UIM domain; that stretch reads QEEEELQRVLELSKQDKGGR. Residues 190–230 show a composition bias toward low complexity; sequence PSGSAGASSSSAANNNTSPSIPQSQAQPLAQDQAQSQAAPQ. In terms of domain architecture, SH3 spans 257–316; that stretch reads NTATRVRAIYPFTGQEVGELDFERGDVIKVLDRGFKEWWRGACNGKIGIFPVTYVEALPE. Positions 437-503 are enriched in low complexity; sequence YSYQQYPQQP…PAQVQQDPAA (67 aa). Positions 437–660 are disordered; the sequence is YSYQQYPQQP…GMDRMSVHAP (224 aa). Residues 517–533 show a composition bias toward polar residues; sequence GSTTSVNRIPSAQTAVQ. Low complexity-rich tracts occupy residues 573 to 623 and 638 to 651; these read QQHG…AAYA and GTQQ…VTAG.

This sequence belongs to the STAM family. As to quaternary structure, component of the ESCRT-0 complex composed of HSE1 and VPS27.

The protein resides in the endosome membrane. Functionally, component of the ESCRT-0 complex which is the sorting receptor for ubiquitinated cargo proteins at the multivesicular body (MVB). The polypeptide is Class E vacuolar protein-sorting machinery protein HSE1 (HSE1) (Cryptococcus neoformans var. neoformans serotype D (strain JEC21 / ATCC MYA-565) (Filobasidiella neoformans)).